A 358-amino-acid chain; its full sequence is Programmed cell death protein 2-like (358 aa).

Ala-2 is subject to N-acetylalanine. Phosphoserine is present on Ser-20. At Thr-22 the chain carries Phosphothreonine.

As to expression, higher expression in lung, colon, mammary gland, cervix, stomach and small intestine.

Its function is as follows. Over-expression suppresses AP1, CREB, NFAT, and NF-kB transcriptional activation, and delays cell cycle progression at S phase. This Homo sapiens (Human) protein is Programmed cell death protein 2-like (PDCD2L).